The chain runs to 231 residues: Putative cobalt transport protein CbiM 1 (231 aa).

Transmembrane regions (helical) follow at residues 9–29 (PGPWWQIWWILSIPVFAYGIF), 41–61 (VLPLIAVSGAVIFVLSSLKLP), 74–94 (GMAVILFGPAITSVLSAIVLL), 107–127 (TFGANLMSMGIIGPFVAYAIY), 135–155 (VNFYVSAFVTATLADWVTYVV), and 181–201 (VFAITQIPLAILEASLITLLF).

The protein belongs to the CbiM family. As to quaternary structure, forms an energy-coupling factor (ECF) transporter complex composed of an ATP-binding protein (A component, CbiO), a transmembrane protein (T component, CbiQ) and 2 possible substrate-capture proteins (S components, CbiM and CbiN) of unknown stoichimetry.

It is found in the cell membrane. Its pathway is cofactor biosynthesis; adenosylcobalamin biosynthesis. Part of the energy-coupling factor (ECF) transporter complex CbiMNOQ involved in cobalt import. This chain is Putative cobalt transport protein CbiM 1, found in Methanosarcina barkeri (strain Fusaro / DSM 804).